A 51-amino-acid chain; its full sequence is Large ribosomal subunit protein eL39 (51 aa).

Positions 32–51 (KRRVTRSPARRHWRRQKLKA) are disordered.

Belongs to the eukaryotic ribosomal protein eL39 family.

The protein is Large ribosomal subunit protein eL39 of Pyrobaculum calidifontis (strain DSM 21063 / JCM 11548 / VA1).